We begin with the raw amino-acid sequence, 97 residues long: MRLWFCLSFLIILCVEHFPGTLAVERNVPESEEKTEQFLRDLFEISRLQRRPAGFTPFRGKFHSQSLRGLSETKRIYNAIWPCKHCNKCKPGLLCKK.

Residues 1–23 (MRLWFCLSFLIILCVEHFPGTLA) form the signal peptide.

It belongs to the bradykinin-related peptide family. As to expression, expressed by the skin glands.

The protein resides in the secreted. Functionally, [Ala3,Thr6]bradykinin: produces in vitro relaxation of rat arterial smooth muscle and constriction of intestinal smooth muscle. Possesses insulin-releasing activity. May target bradykinin receptors (BDKRB). In Bombina variegata (Yellow-bellied toad), this protein is Kininogen-1.